Consider the following 452-residue polypeptide: Mitochondrial distribution and morphology protein 10 (452 aa).

The segment at 105-130 (PLAPESWDSDGPGHEGSDGQEDETTP) is disordered.

This sequence belongs to the MDM10 family. In terms of assembly, component of the ER-mitochondria encounter structure (ERMES) or MDM complex, composed of MMM1, MDM10, MDM12 and MDM34. Associates with the mitochondrial outer membrane sorting assembly machinery SAM(core) complex.

The protein localises to the mitochondrion outer membrane. Its function is as follows. Component of the ERMES/MDM complex, which serves as a molecular tether to connect the endoplasmic reticulum and mitochondria. Components of this complex are involved in the control of mitochondrial shape and protein biogenesis and may function in phospholipid exchange. MDM10 is involved in the late assembly steps of the general translocase of the mitochondrial outer membrane (TOM complex). Functions in the TOM40-specific route of the assembly of outer membrane beta-barrel proteins, including the association of TOM40 with the receptor TOM22 and small TOM proteins. Can associate with the SAM(core) complex as well as the MDM12-MMM1 complex, both involved in late steps of the major beta-barrel assembly pathway, that is responsible for biogenesis of all outer membrane beta-barrel proteins. May act as a switch that shuttles between both complexes and channels precursor proteins into the TOM40-specific pathway. Plays a role in mitochondrial morphology and in the inheritance of mitochondria. The polypeptide is Mitochondrial distribution and morphology protein 10 (Uncinocarpus reesii (strain UAMH 1704)).